The primary structure comprises 389 residues: 1-deoxy-D-xylulose 5-phosphate reductoisomerase (389 aa).

Residues serine 11, glycine 12, serine 13, valine 14, asparagine 39, and asparagine 122 each coordinate NADPH. Lysine 123 is a binding site for 1-deoxy-D-xylulose 5-phosphate. Residue glutamate 124 coordinates NADPH. Aspartate 148 is a Mn(2+) binding site. The 1-deoxy-D-xylulose 5-phosphate site is built by serine 149, glutamate 150, serine 174, and histidine 197. A Mn(2+)-binding site is contributed by glutamate 150. Residue glycine 203 coordinates NADPH. 1-deoxy-D-xylulose 5-phosphate contacts are provided by serine 210, asparagine 215, lysine 216, and glutamate 219. Glutamate 219 serves as a coordination point for Mn(2+).

The protein belongs to the DXR family. Requires Mg(2+) as cofactor. The cofactor is Mn(2+).

The catalysed reaction is 2-C-methyl-D-erythritol 4-phosphate + NADP(+) = 1-deoxy-D-xylulose 5-phosphate + NADPH + H(+). It functions in the pathway isoprenoid biosynthesis; isopentenyl diphosphate biosynthesis via DXP pathway; isopentenyl diphosphate from 1-deoxy-D-xylulose 5-phosphate: step 1/6. Its function is as follows. Catalyzes the NADPH-dependent rearrangement and reduction of 1-deoxy-D-xylulose-5-phosphate (DXP) to 2-C-methyl-D-erythritol 4-phosphate (MEP). This is 1-deoxy-D-xylulose 5-phosphate reductoisomerase from Leptospira interrogans serogroup Icterohaemorrhagiae serovar Lai (strain 56601).